We begin with the raw amino-acid sequence, 230 residues long: Orotidine 5'-phosphate decarboxylase (230 aa).

Substrate contacts are provided by residues aspartate 10, lysine 32, 59-68, threonine 119, arginine 180, glutamine 189, glycine 209, and arginine 210; that span reads DLKYHDIPNT. Lysine 61 acts as the Proton donor in catalysis.

Belongs to the OMP decarboxylase family. Type 1 subfamily. In terms of assembly, homodimer.

The enzyme catalyses orotidine 5'-phosphate + H(+) = UMP + CO2. It functions in the pathway pyrimidine metabolism; UMP biosynthesis via de novo pathway; UMP from orotate: step 2/2. Its function is as follows. Catalyzes the decarboxylation of orotidine 5'-monophosphate (OMP) to uridine 5'-monophosphate (UMP). This chain is Orotidine 5'-phosphate decarboxylase, found in Haemophilus influenzae (strain 86-028NP).